Here is a 572-residue protein sequence, read N- to C-terminus: Potassium-transporting ATPase potassium-binding subunit (572 aa).

Helical transmembrane passes span 6–26 (ILFV…GTYI), 66–86 (FFSL…VLLL), 135–155 (ALAV…IVLI), 177–197 (IFWI…FQGV), 251–271 (TIIT…ALTY), 283–303 (GWMI…VMTI), 382–402 (IFGG…LAVF), 428–448 (MFAL…AAVI), 493–513 (ITIA…VMML), and 537–557 (FIFS…TIFP).

This sequence belongs to the KdpA family. The system is composed of three essential subunits: KdpA, KdpB and KdpC.

Its subcellular location is the cell inner membrane. In terms of biological role, part of the high-affinity ATP-driven potassium transport (or Kdp) system, which catalyzes the hydrolysis of ATP coupled with the electrogenic transport of potassium into the cytoplasm. This subunit binds the periplasmic potassium ions and delivers the ions to the membrane domain of KdpB through an intramembrane tunnel. This Francisella philomiragia subsp. philomiragia (strain ATCC 25017 / CCUG 19701 / FSC 153 / O#319-036) protein is Potassium-transporting ATPase potassium-binding subunit.